The chain runs to 374 residues: Chaperone protein DnaJ (374 aa).

The 66-residue stretch at 5–70 folds into the J domain; it reads DYYEVLGVAR…NKRRMYDSHG (66 aa). Residues 130–207 form a CR-type zinc finger; it reads GVERRIEIPT…CHGNGRVEED (78 aa). Residues Cys-143, Cys-146, Cys-159, Cys-162, Cys-181, Cys-184, Cys-195, and Cys-198 each coordinate Zn(2+). 4 CXXCXGXG motif repeats span residues 143–150, 159–166, 181–188, and 195–202; these read CGDCDGSG, CNVCHGRG, CHNCGGRG, and CKTCHGNG.

The protein belongs to the DnaJ family. Homodimer. Zn(2+) serves as cofactor.

The protein resides in the cytoplasm. In terms of biological role, participates actively in the response to hyperosmotic and heat shock by preventing the aggregation of stress-denatured proteins and by disaggregating proteins, also in an autonomous, DnaK-independent fashion. Unfolded proteins bind initially to DnaJ; upon interaction with the DnaJ-bound protein, DnaK hydrolyzes its bound ATP, resulting in the formation of a stable complex. GrpE releases ADP from DnaK; ATP binding to DnaK triggers the release of the substrate protein, thus completing the reaction cycle. Several rounds of ATP-dependent interactions between DnaJ, DnaK and GrpE are required for fully efficient folding. Also involved, together with DnaK and GrpE, in the DNA replication of plasmids through activation of initiation proteins. In Stenotrophomonas maltophilia (strain K279a), this protein is Chaperone protein DnaJ.